We begin with the raw amino-acid sequence, 112 residues long: Elongin-C (112 aa).

This sequence belongs to the SKP1 family. Heterotrimer of an A (ELOA, ELOA2 or ELOA3P), ELOB and ELOC subunit. The elongin BC complex interacts with EPOP; leading to recruit the elongin BC complex to Polycomb group (PcG) target genes, thereby restricting excessive activity of the PRC2/EED-EZH2 complex. Component of multiple cullin-RING E3 ubiquitin-protein ligase complexes composed of Elongin BC (ELOB and ELOC), a cullin (CUL2 or CUL5), a catalytic subunit (RBX1 or RNF7/RBX2), as well as a substrate adapter protein that can be either ASB2, ASB9, ASB11, KLHDC2, KLHDC3, KLHDC10, APPBP2, FEM1A, FEM1B, FEM1C, LRR1, PCMTD1, SOCS1, SOCS2, SOCS5, SPSB1, SPSB3, ELOA, VHL, WSB1, ZYG11B or RAB40C. Interacts with TMF1. As part of the Elongin BC E3 ubiquitin ligase complex; interacts with NRBP1. May form oligomers as a KLHDC2/KLHDC3-ELOB-ELOC complex; this interaction is autoinhibitory for the E3 ligase complex as the substrate-binding site of KLHDC2/KLHDC3 is blocked in the oligomer. In terms of processing, ubiquitinated by the DCX(AMBRA1) complex, leading to its degradation by the proteasome.

Its subcellular location is the nucleus. It functions in the pathway protein modification; protein ubiquitination. Functionally, SIII, also known as elongin, is a general transcription elongation factor that increases the RNA polymerase II transcription elongation past template-encoded arresting sites. Subunit A is transcriptionally active and its transcription activity is strongly enhanced by binding to the dimeric complex of the SIII regulatory subunits B and C (elongin BC complex). In embryonic stem cells, the elongin BC complex is recruited by EPOP to Polycomb group (PcG) target genes in order generate genomic region that display both active and repressive chromatin properties, an important feature of pluripotent stem cells. In terms of biological role, core component of multiple cullin-RING-based ECS (ElonginB/C-CUL2/5-SOCS-box protein) E3 ubiquitin-protein ligase complexes, which mediate the ubiquitination of target proteins. By binding to BC-box motifs it seems to link target recruitment subunits, like VHL and members of the SOCS box family, to Cullin/RBX1 modules that activate E2 ubiquitination enzymes. Component the von Hippel-Lindau ubiquitination complex CBC(VHL). A number of ECS complexes (containing either KLHDC2, KLHDC3, KLHDC10, APPBP2, FEM1A, FEM1B or FEM1C as substrate-recognition component) are part of the DesCEND (destruction via C-end degrons) pathway, which recognizes a C-degron located at the extreme C terminus of target proteins, leading to their ubiquitination and degradation. The ECS(ASB9) complex mediates ubiquitination and degradation of CKB. As part of a multisubunit ubiquitin ligase complex, polyubiquitinates monoubiquitinated POLR2A. ECS(LRR1) ubiquitinates MCM7 and promotes CMG replisome disassembly by VCP and chromatin extraction during S-phase. As part of the ECS(RAB40C) complex, mediates ANKRD28 ubiquitination and degradation, thereby inhibiting protein phosphatase 6 (PP6) complex activity and focal adhesion assembly during cell migration. This chain is Elongin-C (ELOC), found in Bos taurus (Bovine).